The chain runs to 358 residues: Heme A synthase (358 aa).

8 helical membrane passes run 22-42 (IQVW…VGGA), 107-127 (VLGR…WAIK), 133-153 (VLLQ…VGWW), 172-192 (LAFH…LSQG), 208-228 (FAGW…LVAG), 269-289 (FVHR…AFYV), 302-322 (AFFI…TLLQ), and 324-344 (VPIS…CFSV). His-271 is a heme binding site. A heme-binding site is contributed by His-332.

The protein belongs to the COX15/CtaA family. Type 2 subfamily. In terms of assembly, interacts with CtaB. Requires heme b as cofactor.

Its subcellular location is the cell membrane. It catalyses the reaction Fe(II)-heme o + 2 A + H2O = Fe(II)-heme a + 2 AH2. Its pathway is porphyrin-containing compound metabolism; heme A biosynthesis; heme A from heme O: step 1/1. In terms of biological role, catalyzes the conversion of heme O to heme A by two successive hydroxylations of the methyl group at C8. The first hydroxylation forms heme I, the second hydroxylation results in an unstable dihydroxymethyl group, which spontaneously dehydrates, resulting in the formyl group of heme A. In Bartonella henselae (strain ATCC 49882 / DSM 28221 / CCUG 30454 / Houston 1) (Rochalimaea henselae), this protein is Heme A synthase.